A 364-amino-acid chain; its full sequence is DNA polymerase IV (364 aa).

The UmuC domain occupies Ile-14–Gly-198. Mg(2+) is bound by residues Asp-18 and Asp-116. Glu-117 is an active-site residue.

The protein belongs to the DNA polymerase type-Y family. In terms of assembly, monomer. The cofactor is Mg(2+).

Its subcellular location is the cytoplasm. It carries out the reaction DNA(n) + a 2'-deoxyribonucleoside 5'-triphosphate = DNA(n+1) + diphosphate. Poorly processive, error-prone DNA polymerase involved in untargeted mutagenesis. Copies undamaged DNA at stalled replication forks, which arise in vivo from mismatched or misaligned primer ends. These misaligned primers can be extended by PolIV. Exhibits no 3'-5' exonuclease (proofreading) activity. May be involved in translesional synthesis, in conjunction with the beta clamp from PolIII. This chain is DNA polymerase IV, found in Streptococcus pyogenes serotype M5 (strain Manfredo).